The primary structure comprises 37 residues: Large ribosomal subunit protein bL36 (37 aa).

This sequence belongs to the bacterial ribosomal protein bL36 family.

The chain is Large ribosomal subunit protein bL36 from Moorella thermoacetica (strain ATCC 39073 / JCM 9320).